We begin with the raw amino-acid sequence, 320 residues long: Methionyl-tRNA formyltransferase (320 aa).

114–117 (SLLP) is a binding site for (6S)-5,6,7,8-tetrahydrofolate.

The protein belongs to the Fmt family.

It catalyses the reaction L-methionyl-tRNA(fMet) + (6R)-10-formyltetrahydrofolate = N-formyl-L-methionyl-tRNA(fMet) + (6S)-5,6,7,8-tetrahydrofolate + H(+). Attaches a formyl group to the free amino group of methionyl-tRNA(fMet). The formyl group appears to play a dual role in the initiator identity of N-formylmethionyl-tRNA by promoting its recognition by IF2 and preventing the misappropriation of this tRNA by the elongation apparatus. This Acinetobacter baumannii (strain SDF) protein is Methionyl-tRNA formyltransferase.